We begin with the raw amino-acid sequence, 304 residues long: Proteasome subunit beta (304 aa).

Positions 1-65 are cleaved as a propeptide — removed in mature form; by autocatalysis; the sequence is MTWPHFEQLA…LTPTDAVPHG (65 aa). Thr66 serves as the catalytic Nucleophile.

The protein belongs to the peptidase T1B family. The 20S proteasome core is composed of 14 alpha and 14 beta subunits that assemble into four stacked heptameric rings, resulting in a barrel-shaped structure. The two inner rings, each composed of seven catalytic beta subunits, are sandwiched by two outer rings, each composed of seven alpha subunits. The catalytic chamber with the active sites is on the inside of the barrel. Has a gated structure, the ends of the cylinder being occluded by the N-termini of the alpha-subunits. Is capped by the proteasome-associated ATPase, ARC.

The protein localises to the cytoplasm. It carries out the reaction Cleavage of peptide bonds with very broad specificity.. It participates in protein degradation; proteasomal Pup-dependent pathway. With respect to regulation, the formation of the proteasomal ATPase ARC-20S proteasome complex, likely via the docking of the C-termini of ARC into the intersubunit pockets in the alpha-rings, may trigger opening of the gate for substrate entry. Interconversion between the open-gate and close-gate conformations leads to a dynamic regulation of the 20S proteasome proteolysis activity. Component of the proteasome core, a large protease complex with broad specificity involved in protein degradation. The chain is Proteasome subunit beta from Mycobacterium sp. (strain JLS).